The following is a 283-amino-acid chain: K88 fimbrial protein AC (283 aa).

The first 21 residues, 1–21, serve as a signal peptide directing secretion; the sequence is MKKTLIALAIAASAASGMAHA.

This sequence belongs to the fimbrial K88 protein family. As to quaternary structure, K88 fimbria, 0.1-1 micrometer in length and 7 nanometers in diameter, is composed of about 100 identical subunits.

Its subcellular location is the fimbrium. Functionally, K88 major fimbrial subunit. Fimbriae (also called pili), are polar filaments radiating from the surface of the bacterium to a length of 0.5-1.5 micrometers and numbering 100-300 per cell. They enable bacteria to colonize the epithelium of specific host organs. The sequence is that of K88 fimbrial protein AC (faeG) from Escherichia coli.